The sequence spans 523 residues: Cytoplasmic dynein 1 light intermediate chain 1 (523 aa).

The tract at residues 1-45 (MAAVGRVGSFGSSPPGLASTYASGPLANELASGSGGPAAGDDEDG) is disordered. Residue 74–81 (GEDGAGKT) coordinates ATP. S207 carries the post-translational modification Phosphoserine. A Phosphothreonine modification is found at T213. Disordered regions lie at residues 387–434 (PPTA…DPNM) and 457–523 (GSPG…GEAS). S398 and S405 each carry phosphoserine. Phosphothreonine is present on T408. Phosphoserine occurs at positions 412, 419, 421, and 427. The span at 412-421 (SVSSNVASVS) shows a compositional bias: low complexity. Over residues 458–473 (SPGGPGVGGSPGGGAA) the composition is skewed to gly residues. Over residues 474–483 (GASTSLPPSA) the composition is skewed to low complexity. 2 positions are modified to phosphoserine: S486 and S510. Residues T512 and T513 each carry the phosphothreonine modification. S516 bears the Phosphoserine mark.

Belongs to the dynein light intermediate chain family. As to quaternary structure, homodimer. The cytoplasmic dynein 1 complex consists of two catalytic heavy chains (HCs) and a number of non-catalytic subunits presented by intermediate chains (ICs), light intermediate chains (LICs) and light chains (LCs); the composition seems to vary in respect to the IC, LIC and LC composition. The heavy chain homodimer serves as a scaffold for the probable homodimeric assembly of the respective non-catalytic subunits. The ICs and LICs bind directly to the HC dimer and the LCs assemble on the IC dimer. Self-associates. Interacts with DYNC1H1; DYNC1LI1 and DYNC1LI2 bind mutually exclusive to DYNC1H1. Interacts with PCNT. Forms a complex with RAB11FIP3 and RAB11A1; the interaction between DYNC1LI1 and RAB11FIP3 is direct and induces DYNC1LI1 localization onto endosomal membrane; the complex regulates endocytic trafficking. Interacts with RUFY3. In terms of processing, phosphorylated during mitosis but not in interphase.

It is found in the cytoplasm. It localises to the chromosome. The protein localises to the centromere. The protein resides in the kinetochore. Its subcellular location is the cytoskeleton. It is found in the spindle pole. It localises to the recycling endosome membrane. Its function is as follows. Acts as one of several non-catalytic accessory components of the cytoplasmic dynein 1 complex that are thought to be involved in linking dynein to cargos and to adapter proteins that regulate dynein function. Cytoplasmic dynein 1 acts as a motor for the intracellular retrograde motility of vesicles and organelles along microtubules. May play a role in binding dynein to membranous organelles or chromosomes. Probably involved in the microtubule-dependent transport of pericentrin. Is required for progress through the spindle assembly checkpoint. The phosphorylated form appears to be involved in the selective removal of MAD1L1 and MAD1L2 but not BUB1B from kinetochores. Forms a functional Rab11/RAB11FIP3/dynein complex onto endosomal membrane that regulates the movement of peripheral sorting endosomes (SE) along microtubule tracks toward the microtubule organizing center/centrosome, generating the endosomal recycling compartment (ERC). This is Cytoplasmic dynein 1 light intermediate chain 1 (Dync1li1) from Rattus norvegicus (Rat).